The sequence spans 328 residues: Probable cell division protein WhiA (328 aa).

The segment at residues 276-309 (SLEELGRLADPQMTKDAVAGRIRRLLHMADKKAS) is a DNA-binding region (H-T-H motif).

Belongs to the WhiA family.

Functionally, involved in cell division and chromosome segregation. The polypeptide is Probable cell division protein WhiA (Corynebacterium diphtheriae (strain ATCC 700971 / NCTC 13129 / Biotype gravis)).